A 119-amino-acid polypeptide reads, in one-letter code: Flagellar transcriptional regulator FlhD (119 aa).

This sequence belongs to the FlhD family. Homodimer; disulfide-linked. Forms a heterohexamer composed of two FlhC and four FlhD subunits. Each FlhC binds a FlhD dimer, forming a heterotrimer, and a hexamer assembles by dimerization of two heterotrimers.

Its subcellular location is the cytoplasm. Its function is as follows. Functions in complex with FlhC as a master transcriptional regulator that regulates transcription of several flagellar and non-flagellar operons by binding to their promoter region. Activates expression of class 2 flagellar genes, including fliA, which is a flagellum-specific sigma factor that turns on the class 3 genes. Also regulates genes whose products function in a variety of physiological pathways. The sequence is that of Flagellar transcriptional regulator FlhD from Cronobacter sakazakii (strain ATCC BAA-894) (Enterobacter sakazakii).